The chain runs to 154 residues: SsrA-binding protein (154 aa).

The protein belongs to the SmpB family.

Its subcellular location is the cytoplasm. Required for rescue of stalled ribosomes mediated by trans-translation. Binds to transfer-messenger RNA (tmRNA), required for stable association of tmRNA with ribosomes. tmRNA and SmpB together mimic tRNA shape, replacing the anticodon stem-loop with SmpB. tmRNA is encoded by the ssrA gene; the 2 termini fold to resemble tRNA(Ala) and it encodes a 'tag peptide', a short internal open reading frame. During trans-translation Ala-aminoacylated tmRNA acts like a tRNA, entering the A-site of stalled ribosomes, displacing the stalled mRNA. The ribosome then switches to translate the ORF on the tmRNA; the nascent peptide is terminated with the 'tag peptide' encoded by the tmRNA and targeted for degradation. The ribosome is freed to recommence translation, which seems to be the essential function of trans-translation. This is SsrA-binding protein from Gluconacetobacter diazotrophicus (strain ATCC 49037 / DSM 5601 / CCUG 37298 / CIP 103539 / LMG 7603 / PAl5).